A 354-amino-acid chain; its full sequence is DNA integrity scanning protein DisA (354 aa).

The DAC domain maps to 6 to 144 (GMKIKDTLKI…GDIKYVLRDS (139 aa)). ATP contacts are provided by residues glycine 73, leucine 91, and 104 to 108 (TRHRT).

The protein belongs to the DisA family. In terms of assembly, homooctamer. The cofactor is Mg(2+).

The enzyme catalyses 2 ATP = 3',3'-c-di-AMP + 2 diphosphate. Its function is as follows. Participates in a DNA-damage check-point that is active prior to asymmetric division when DNA is damaged. DisA forms globular foci that rapidly scan along the chromosomes during sporulation, searching for lesions. When a lesion is present, DisA pauses at the lesion site. This triggers a cellular response that culminates in a temporary block in sporulation initiation. Functionally, also has diadenylate cyclase activity, catalyzing the condensation of 2 ATP molecules into cyclic di-AMP (c-di-AMP). c-di-AMP acts as a signaling molecule that couples DNA integrity with progression of sporulation. The rise in c-di-AMP level generated by DisA while scanning the chromosome, operates as a positive signal that advances sporulation; upon encountering a lesion, the DisA focus arrests at the damaged site and halts c-di-AMP synthesis. This Clostridium botulinum (strain Alaska E43 / Type E3) protein is DNA integrity scanning protein DisA.